Reading from the N-terminus, the 194-residue chain is Ion-translocating oxidoreductase complex subunit A (194 aa).

The next 6 helical transmembrane spans lie at 5 to 25 (VLIL…FLGL), 47 to 67 (FVLT…LVPF), 72 to 92 (LRTI…EMFV), 102 to 122 (VLGV…VALL), 135 to 155 (LTYG…FAAM), and 172 to 192 (SIGL…SGLI).

The protein belongs to the NqrDE/RnfAE family. As to quaternary structure, the complex is composed of six subunits: RnfA, RnfB, RnfC, RnfD, RnfE and RnfG.

The protein resides in the cell inner membrane. Part of a membrane-bound complex that couples electron transfer with translocation of ions across the membrane. In Alcanivorax borkumensis (strain ATCC 700651 / DSM 11573 / NCIMB 13689 / SK2), this protein is Ion-translocating oxidoreductase complex subunit A.